The sequence spans 177 residues: Coatomer subunit zeta-3 (177 aa).

It belongs to the adaptor complexes small subunit family. In terms of assembly, oligomeric complex that consists of at least the alpha, beta, beta', gamma, delta, epsilon and zeta subunits.

It localises to the cytoplasm. The protein localises to the golgi apparatus membrane. It is found in the cytoplasmic vesicle. The protein resides in the COPI-coated vesicle membrane. Its function is as follows. The coatomer is a cytosolic protein complex that binds to dilysine motifs and reversibly associates with Golgi non-clathrin-coated vesicles, which further mediate biosynthetic protein transport from the ER, via the Golgi up to the trans Golgi network. Coatomer complex is required for budding from Golgi membranes, and is essential for the retrograde Golgi-to-ER transport of dilysine-tagged proteins. The zeta subunit may be involved in regulating the coat assembly and, hence, the rate of biosynthetic protein transport due to its association-dissociation properties with the coatomer complex. The protein is Coatomer subunit zeta-3 of Oryza sativa subsp. japonica (Rice).